The sequence spans 125 residues: Small ribosomal subunit protein uS17 (125 aa).

Disordered stretches follow at residues 1–21 (MSSS…VSSR) and 101–125 (VAAQ…APQA).

This sequence belongs to the universal ribosomal protein uS17 family. As to quaternary structure, part of the 30S ribosomal subunit.

One of the primary rRNA binding proteins, it binds specifically to the 5'-end of 16S ribosomal RNA. This is Small ribosomal subunit protein uS17 from Opitutus terrae (strain DSM 11246 / JCM 15787 / PB90-1).